We begin with the raw amino-acid sequence, 470 residues long: 6-phospho-beta-galactosidase 1 (470 aa).

Glutamine 23, histidine 120, asparagine 163, glutamate 164, and asparagine 300 together coordinate D-galactose 6-phosphate. Glutamate 164 functions as the Proton donor in the catalytic mechanism. Glutamate 378 acts as the Nucleophile in catalysis. Serine 434, tryptophan 435, lysine 441, and tyrosine 443 together coordinate D-galactose 6-phosphate.

It belongs to the glycosyl hydrolase 1 family.

It catalyses the reaction a 6-phospho-beta-D-galactoside + H2O = D-galactose 6-phosphate + an alcohol. Its pathway is carbohydrate metabolism; lactose degradation; D-galactose 6-phosphate and beta-D-glucose from lactose 6-phosphate: step 1/1. The protein is 6-phospho-beta-galactosidase 1 of Streptococcus pneumoniae (strain ATCC BAA-255 / R6).